Consider the following 315-residue polypeptide: MSERDDGLGLSLSLSLGFNQKDPSSRLNPMPLASYASSSHMQHMQQSNYNHPQKIQNTWINMFQSSERNSDMRSFLRGIDVNRAPSTVVVDVEDEGAGVSSPNSTVSSVMSGKKSERELMAAAGAVGGGRVEDNEIERASCSLGGGSDDEDGSGNGDDSSRKKLRLSKEQALVLEETFKEHSTLNPKQKMALAKQLNLRTRQVEVWFQNRRARTKLKQTEVDCEYLKRCCENLTDENRRLQKEVSELRALKLSPHLYMHMKPPTTLTMCPSCERVAVTSSSSSVAPPVMNSSSPMGPMSPWAAMPLRQRPAAGSH.

The disordered stretch occupies residues 140-163 (SCSLGGGSDDEDGSGNGDDSSRKK). The segment at residues 159-218 (SSRKKLRLSKEQALVLEETFKEHSTLNPKQKMALAKQLNLRTRQVEVWFQNRRARTKLKQ) is a DNA-binding region (homeobox). The interval 226-247 (LKRCCENLTDENRRLQKEVSEL) is leucine-zipper. The segment covering 280-305 (SSSSVAPPVMNSSSPMGPMSPWAAMP) has biased composition (low complexity). The disordered stretch occupies residues 280–315 (SSSSVAPPVMNSSSPMGPMSPWAAMPLRQRPAAGSH).

The protein belongs to the HD-ZIP homeobox family. Class II subfamily.

The protein resides in the nucleus. Probable transcription factor. This is Homeobox-leucine zipper protein HAT3 (HAT3) from Arabidopsis thaliana (Mouse-ear cress).